A 144-amino-acid polypeptide reads, in one-letter code: Interferon-induced transmembrane protein 2 (144 aa).

Met-1 is modified (N-acetylmethionine). The Cytoplasmic portion of the chain corresponds to Met-1 to His-56. At Tyr-19 the chain carries Phosphotyrosine. Positions Val-57–Tyr-77 form an intramembrane region, helical. Residues Cys-70, Cys-71, and Cys-104 are each lipidated (S-palmitoyl cysteine). Residues Ala-78 to Leu-110 are Cytoplasmic-facing. A helical membrane pass occupies residues Ile-111 to Val-131. Residues Phe-132 to Phe-144 are Extracellular-facing.

The protein belongs to the CD225/Dispanin family. In terms of assembly, interacts with CD81. Post-translationally, palmitoylation on membrane-proximal cysteines controls clustering in membrane compartments and antiviral activity. In terms of processing, phosphorylation at Tyr-19 is required for endosomal and lysosomal location. Predominantly expressed in nascent primordial germ cells, as well as in gonadal germ cells.

It localises to the cell membrane. It is found in the lysosome membrane. The protein localises to the late endosome membrane. Functionally, IFN-induced antiviral protein which inhibits the entry of viruses to the host cell cytoplasm, permitting endocytosis, but preventing subsequent viral fusion and release of viral contents into the cytosol. Active against multiple viruses, including influenza A virus, SARS coronavirus (SARS-CoV), Marburg virus (MARV) and Ebola virus (EBOV), Dengue virus (DNV) and West Nile virus (WNV). Can inhibit: influenza virus hemagglutinin protein-mediated viral entry, MARV and EBOV GP1,2-mediated viral entry and SARS-CoV S protein-mediated viral entry. Induces cell cycle arrest and mediates apoptosis by caspase activation and in p53-independent manner. This chain is Interferon-induced transmembrane protein 2 (Ifitm2), found in Mus musculus (Mouse).